Here is a 246-residue protein sequence, read N- to C-terminus: Mediator of RNA polymerase II transcription subunit 6 (246 aa).

2 disordered regions span residues 165 to 186 (MKKK…RSTN) and 207 to 246 (EALE…ATTK). Basic and acidic residues-rich tracts occupy residues 166 to 184 (KKKE…EERS) and 208 to 224 (ALEK…KPEE).

It belongs to the Mediator complex subunit 6 family. As to quaternary structure, component of the Mediator complex. Interacts with let-19/mdt-13. Interacts with RNA polymerase II. Interacts with mdt-28.

It is found in the nucleus. Functionally, component of the Mediator complex, a coactivator involved in the regulated transcription of nearly all RNA polymerase II-dependent genes. Mediator functions as a bridge to convey information from gene-specific regulatory proteins to the basal RNA polymerase II transcription machinery. Mediator is recruited to promoters by direct interactions with regulatory proteins and serves as a scaffold for the assembly of a functional preinitiation complex with RNA polymerase II and the general transcription factors. The sequence is that of Mediator of RNA polymerase II transcription subunit 6 (mdt-6) from Caenorhabditis briggsae.